The chain runs to 649 residues: L-ornithine N(5)-monooxygenase (649 aa).

Residues 72–80 (EKRGHFAWH) and glutamine 91 contribute to the FAD site. Lysine 96 is a binding site for substrate. Valine 157 is a binding site for FAD. Residues 289 to 292 (AGQS) and arginine 314 contribute to the NADP(+) site. Residues 328–331 (NSAA) and asparagine 359 contribute to the substrate site. 359 to 361 (NYS) is a binding site for NADP(+). Residues 512–547 (AMQSDAVRSGKSSPGSGSDASSTSSQQTLASENSTE) form a disordered region. Residues 520–536 (SGKSSPGSGSDASSTSS) are compositionally biased toward low complexity. Residues 537-547 (QQTLASENSTE) show a composition bias toward polar residues. FAD is bound at residue 569–571 (SLL). A substrate-binding site is contributed by serine 572. The tract at residues 585–611 (LLQRLPRTRRGTASSAATQPAASTVAS) is disordered. Residues 596-611 (TASSAATQPAASTVAS) show a composition bias toward low complexity.

It belongs to the lysine N(6)-hydroxylase/L-ornithine N(5)-oxygenase family. As to quaternary structure, homotetramer. Requires FAD as cofactor.

It catalyses the reaction L-ornithine + NADPH + O2 = N(5)-hydroxy-L-ornithine + NADP(+) + H2O. The enzyme catalyses L-ornithine + NADH + O2 = N(5)-hydroxy-L-ornithine + NAD(+) + H2O. Its pathway is siderophore biosynthesis; ferrichrome biosynthesis. Catalyzes the conversion of L-ornithine to N(5)-hydroxyornithine, the first step in the biosynthesis of all hydroxamate-containing siderophores, such as ferrichrome. The protein is L-ornithine N(5)-monooxygenase (SID1) of Mycosarcoma maydis (Corn smut fungus).